Here is a 243-residue protein sequence, read N- to C-terminus: Putative glycerophosphodiester phosphodiesterase YhdW (243 aa).

Residues 1–238 (MYIIAHRGAS…DYPDFIIKDG (238 aa)) form the GP-PDE domain. Histidine 6 serves as the catalytic Proton acceptor. Residues glutamate 33 and aspartate 35 each contribute to the Ca(2+) site. The Proton donor role is filled by histidine 48. Glutamate 107 provides a ligand contact to Ca(2+).

Belongs to the glycerophosphoryl diester phosphodiesterase family. It depends on Ca(2+) as a cofactor.

The catalysed reaction is a sn-glycero-3-phosphodiester + H2O = an alcohol + sn-glycerol 3-phosphate + H(+). In terms of biological role, glycerophosphodiester phosphodiesterase hydrolyzes glycerophosphodiesters into glycerol-3-phosphate (G3P) and the corresponding alcohol. The sequence is that of Putative glycerophosphodiester phosphodiesterase YhdW (yhdW) from Bacillus subtilis (strain 168).